A 76-amino-acid chain; its full sequence is Small ribosomal subunit protein bS18 (76 aa).

This sequence belongs to the bacterial ribosomal protein bS18 family. In terms of assembly, part of the 30S ribosomal subunit. Forms a tight heterodimer with protein bS6.

In terms of biological role, binds as a heterodimer with protein bS6 to the central domain of the 16S rRNA, where it helps stabilize the platform of the 30S subunit. This chain is Small ribosomal subunit protein bS18, found in Neisseria gonorrhoeae (strain ATCC 700825 / FA 1090).